Reading from the N-terminus, the 500-residue chain is Transcription factor-like 5 protein (500 aa).

Composition is skewed to pro residues over residues 1 to 12 (MSGPGPREPPPE) and 196 to 210 (AEPP…PPEP). Disordered regions lie at residues 1-34 (MSGP…ALGE) and 191-211 (FNSI…PEPG). The segment at 347–356 (MRQLDTNVER) is R3 epitope (recognized by Chagas's antibodies). Residues 365–410 (VGEGATATQGAWQSSESSQANLGEQAQSGPQGGRSQRRERHNRMER) form a disordered region. Residues 370–393 (TATQGAWQSSESSQANLGEQAQSG) show a composition bias toward polar residues. The 51-residue stretch at 400–450 (QRRERHNRMERDRRRRIRICCDELNLLVPFCNAETDKATTLQWTTAFLKYI) folds into the bHLH domain. Residues 481-500 (SLVTCPAQGSLQSSPSMEIK) are R1 epitope (recognized by Chagas's antibodies).

Efficient DNA binding requires dimerization with another bHLH protein. In terms of tissue distribution, isoform 3 is testis specific. Isoform 2 is pancreas specific.

It localises to the nucleus. In terms of biological role, putative transcription factor. Isoform 3 may play a role in early spermatogenesis. The polypeptide is Transcription factor-like 5 protein (TCFL5) (Homo sapiens (Human)).